The following is a 38-amino-acid chain: Large ribosomal subunit protein bL36 (38 aa).

This sequence belongs to the bacterial ribosomal protein bL36 family.

The polypeptide is Large ribosomal subunit protein bL36 (Lactobacillus acidophilus (strain ATCC 700396 / NCK56 / N2 / NCFM)).